Consider the following 327-residue polypeptide: GTPase Obg (327 aa).

One can recognise an Obg domain in the interval 1–159; sequence MQFIDQANII…WEVQLELKLL (159 aa). One can recognise an OBG-type G domain in the interval 160–327; sequence AEVGIIGLPN…SLLFEVWKRI (168 aa). ATP-binding positions include 166 to 173, 191 to 195, 213 to 216, 280 to 283, and 309 to 311; these read GLPNAGKS, FTTLI, DIPG, NKME, and SSS. Mg(2+) contacts are provided by serine 173 and threonine 193.

It belongs to the TRAFAC class OBG-HflX-like GTPase superfamily. OBG GTPase family. In terms of assembly, monomer. The cofactor is Mg(2+).

Its subcellular location is the cytoplasm. An essential GTPase which binds GTP, GDP and possibly (p)ppGpp with moderate affinity, with high nucleotide exchange rates and a fairly low GTP hydrolysis rate. Plays a role in control of the cell cycle, stress response, ribosome biogenesis and in those bacteria that undergo differentiation, in morphogenesis control. The sequence is that of GTPase Obg from Prochlorococcus marinus (strain MIT 9312).